A 201-amino-acid chain; its full sequence is Female-specific protein transformer (201 aa).

The segment at 1–117 (MDADSSSRSP…RSRSRSRTPR (117 aa)) is disordered. A compositionally biased stretch (basic and acidic residues) spans 9 to 37 (SPRDTRTCARPKEKVPYFADEGRERDRVR). Basic residues-rich tracts occupy residues 38–62 (NLRHRKTSITRPTTSHRGRPMRARS) and 99–115 (KQRRRRSRSRSRSRSRT).

The protein resides in the nucleus speckle. In terms of biological role, member of the regulatory pathway controlling female somatic sexual differentiation, regulated by Sxl. Activates dsx female-specific splicing by promoting the formation of a splicing enhancer complex which consists of tra, tra2 and sr proteins. The sequence is that of Female-specific protein transformer (tra) from Drosophila hydei (Fruit fly).